Here is a 100-residue protein sequence, read N- to C-terminus: Small ribosomal subunit protein uS14 (100 aa).

This sequence belongs to the universal ribosomal protein uS14 family. In terms of assembly, part of the 30S ribosomal subunit. Contacts proteins S3 and S10.

Its function is as follows. Binds 16S rRNA, required for the assembly of 30S particles and may also be responsible for determining the conformation of the 16S rRNA at the A site. The sequence is that of Small ribosomal subunit protein uS14 from Picosynechococcus sp. (strain ATCC 27264 / PCC 7002 / PR-6) (Agmenellum quadruplicatum).